The following is a 43-amino-acid chain: Protein PsbN (43 aa).

Residues 5 to 27 (TIFSIFFSCLLIGLTGYSLYTSF) form a helical membrane-spanning segment.

Belongs to the PsbN family.

Its subcellular location is the plastid. It localises to the chloroplast thylakoid membrane. In terms of biological role, may play a role in photosystem I and II biogenesis. The polypeptide is Protein PsbN (Mesostigma viride (Green alga)).